We begin with the raw amino-acid sequence, 382 residues long: Flap endonuclease 1 (382 aa).

Residues 1 to 104 (MGILGLSKLI…GELAKRAERR (104 aa)) form an N-domain region. A Mg(2+)-binding site is contributed by D34. 2 residues coordinate DNA: R47 and R70. D86 is a Mg(2+) binding site. The segment at 95-118 (GELAKRAERREDAQKALEKATEAG) is disordered. Basic and acidic residues predominate over residues 96–115 (ELAKRAERREDAQKALEKAT). Residues 122–253 (DMDKFNRRLV…KRATELMNSY (132 aa)) are I-domain. Residues E158, E160, D179, and D181 each contribute to the Mg(2+) site. E158 contributes to the DNA binding site. DNA contacts are provided by G231 and D233. D233 is a Mg(2+) binding site. The interaction with PCNA stretch occupies residues 336–344 (TQGRLDSFF). The disordered stretch occupies residues 353 to 382 (TTPKRKADDKNNVQQKKSKTAGNTKGKRPK). Residues 364–375 (NVQQKKSKTAGN) are compositionally biased toward polar residues.

It belongs to the XPG/RAD2 endonuclease family. FEN1 subfamily. As to quaternary structure, interacts with PCNA. Three molecules of FEN1 bind to one PCNA trimer with each molecule binding to one PCNA monomer. PCNA stimulates the nuclease activity without altering cleavage specificity. It depends on Mg(2+) as a cofactor. Post-translationally, phosphorylated. Phosphorylation upon DNA damage induces relocalization to the nuclear plasma.

The protein localises to the nucleus. The protein resides in the nucleolus. Its subcellular location is the nucleoplasm. It localises to the mitochondrion. Structure-specific nuclease with 5'-flap endonuclease and 5'-3' exonuclease activities involved in DNA replication and repair. During DNA replication, cleaves the 5'-overhanging flap structure that is generated by displacement synthesis when DNA polymerase encounters the 5'-end of a downstream Okazaki fragment. It enters the flap from the 5'-end and then tracks to cleave the flap base, leaving a nick for ligation. Also involved in the long patch base excision repair (LP-BER) pathway, by cleaving within the apurinic/apyrimidinic (AP) site-terminated flap. Acts as a genome stabilization factor that prevents flaps from equilibrating into structures that lead to duplications and deletions. Also possesses 5'-3' exonuclease activity on nicked or gapped double-stranded DNA, and exhibits RNase H activity. Also involved in replication and repair of rDNA and in repairing mitochondrial DNA. In Glossina morsitans morsitans (Savannah tsetse fly), this protein is Flap endonuclease 1.